The chain runs to 149 residues: FAD synthase (149 aa).

ATP-binding positions include 9–10 (VF), 14–17 (HPGH), Asp-93, and Tyr-120.

The protein belongs to the archaeal FAD synthase family. As to quaternary structure, homodimer. Requires a divalent metal cation as cofactor.

It carries out the reaction FMN + ATP + H(+) = FAD + diphosphate. It functions in the pathway cofactor biosynthesis; FAD biosynthesis; FAD from FMN: step 1/1. Functionally, catalyzes the transfer of the AMP portion of ATP to flavin mononucleotide (FMN) to produce flavin adenine dinucleotide (FAD) coenzyme. The sequence is that of FAD synthase from Aciduliprofundum boonei (strain DSM 19572 / T469).